A 175-amino-acid polypeptide reads, in one-letter code: Ribosome maturation factor RimM (175 aa).

Residues 99–172 (ADEYHVSDLI…RLEVDAPPGL (74 aa)) enclose the PRC barrel domain.

Belongs to the RimM family. As to quaternary structure, binds ribosomal protein uS19.

Its subcellular location is the cytoplasm. An accessory protein needed during the final step in the assembly of 30S ribosomal subunit, possibly for assembly of the head region. Essential for efficient processing of 16S rRNA. May be needed both before and after RbfA during the maturation of 16S rRNA. It has affinity for free ribosomal 30S subunits but not for 70S ribosomes. The protein is Ribosome maturation factor RimM of Picosynechococcus sp. (strain ATCC 27264 / PCC 7002 / PR-6) (Agmenellum quadruplicatum).